Consider the following 70-residue polypeptide: Large ribosomal subunit protein bL31 (70 aa).

Zn(2+) contacts are provided by Cys16, Cys18, Cys37, and Cys40.

It belongs to the bacterial ribosomal protein bL31 family. Type A subfamily. Part of the 50S ribosomal subunit. Requires Zn(2+) as cofactor.

Binds the 23S rRNA. In Ectopseudomonas mendocina (strain ymp) (Pseudomonas mendocina), this protein is Large ribosomal subunit protein bL31.